The primary structure comprises 342 residues: Methionyl-tRNA formyltransferase (342 aa).

(6S)-5,6,7,8-tetrahydrofolate is bound at residue 110-113 (SLLP).

Belongs to the Fmt family.

It catalyses the reaction L-methionyl-tRNA(fMet) + (6R)-10-formyltetrahydrofolate = N-formyl-L-methionyl-tRNA(fMet) + (6S)-5,6,7,8-tetrahydrofolate + H(+). Attaches a formyl group to the free amino group of methionyl-tRNA(fMet). The formyl group appears to play a dual role in the initiator identity of N-formylmethionyl-tRNA by promoting its recognition by IF2 and preventing the misappropriation of this tRNA by the elongation apparatus. This Synechococcus sp. (strain CC9311) protein is Methionyl-tRNA formyltransferase.